The primary structure comprises 294 residues: Large ribosomal subunit protein uL4m (294 aa).

The disordered stretch occupies residues 119–139; the sequence is EVSGGGRKPWQQKGSGRARHG. Omega-N-methylarginine is present on arginine 147.

Belongs to the universal ribosomal protein uL4 family. Component of the mitochondrial ribosome large subunit (39S) which comprises a 16S rRNA and about 50 distinct proteins. Interacts with MIEF1 upstream open reading frame protein.

It is found in the mitochondrion. This is Large ribosomal subunit protein uL4m (Mrpl4) from Mus musculus (Mouse).